Reading from the N-terminus, the 255-residue chain is tRNA uridine(34) hydroxylase (255 aa).

One can recognise a Rhodanese domain in the interval Ala125–Ser219. Cys179 serves as the catalytic Cysteine persulfide intermediate.

Belongs to the TrhO family.

It carries out the reaction uridine(34) in tRNA + AH2 + O2 = 5-hydroxyuridine(34) in tRNA + A + H2O. In terms of biological role, catalyzes oxygen-dependent 5-hydroxyuridine (ho5U) modification at position 34 in tRNAs. This Nitrobacter hamburgensis (strain DSM 10229 / NCIMB 13809 / X14) protein is tRNA uridine(34) hydroxylase.